A 341-amino-acid chain; its full sequence is Glyceraldehyde-3-phosphate dehydrogenase (341 aa).

Residues 11-12 (TI) and Gly-109 contribute to the NAD(+) site. Residue 138–140 (SCN) coordinates D-glyceraldehyde 3-phosphate. Cys-139 acts as the Nucleophile in catalysis. Residue Arg-167 participates in NAD(+) binding. Residues Thr-169 and 192-193 (HA) contribute to the D-glyceraldehyde 3-phosphate site. Residue Gln-299 participates in NAD(+) binding.

This sequence belongs to the glyceraldehyde-3-phosphate dehydrogenase family. As to quaternary structure, homotetramer.

The protein localises to the cytoplasm. The catalysed reaction is D-glyceraldehyde 3-phosphate + phosphate + NADP(+) = (2R)-3-phospho-glyceroyl phosphate + NADPH + H(+). The enzyme catalyses D-glyceraldehyde 3-phosphate + phosphate + NAD(+) = (2R)-3-phospho-glyceroyl phosphate + NADH + H(+). The protein operates within carbohydrate degradation; glycolysis; pyruvate from D-glyceraldehyde 3-phosphate: step 1/5. This is Glyceraldehyde-3-phosphate dehydrogenase from Picrophilus torridus (strain ATCC 700027 / DSM 9790 / JCM 10055 / NBRC 100828 / KAW 2/3).